Consider the following 1272-residue polypeptide: RING finger protein PFE0100w (1272 aa).

Residues 216-260 (INKINDVSNNDPKKDNNEKNTSSNNITHNNYNDISNNNNNNNNIN) form a disordered region. A compositionally biased stretch (low complexity) spans 234–260 (KNTSSNNITHNNYNDISNNNNNNNNIN). One copy of the CHCR repeat lies at 608-752 (YIQTINYLET…GYKFIKYYPQ (145 aa)). The chain crosses the membrane as a helical span at residues 771–791 (IFIPLFLDNIDFLFMFIVKFL). 2 disordered regions span residues 842–862 (NQNH…NNSQ) and 908–970 (ENQT…IINK). Composition is skewed to low complexity over residues 850–861 (SDSHNLSDDNNS) and 909–956 (NQTN…IQTN). The span at 957 to 967 (KQKGNSTTNKI) shows a compositional bias: polar residues. The stretch at 1146-1182 (MNDMNKNINDKCIEIEKDKKELEKIKKKQLKKKYNFY) forms a coiled coil. The RING-type; atypical zinc finger occupies 1189-1224 (CSICKEILSVPMIHFLCKHSYHSYCLKDNNVCILCH).

It is found in the membrane. The chain is RING finger protein PFE0100w from Plasmodium falciparum (isolate 3D7).